Here is a 512-residue protein sequence, read N- to C-terminus: GMP synthase [glutamine-hydrolyzing] (512 aa).

Positions Gly-9 to Thr-198 constitute a Glutamine amidotransferase type-1 domain. Cys-87 (nucleophile) is an active-site residue. Catalysis depends on residues His-173 and Glu-175. In terms of domain architecture, GMPS ATP-PPase spans Trp-199–Lys-387. Residue Ser-226–Thr-232 participates in ATP binding.

The enzyme catalyses XMP + L-glutamine + ATP + H2O = GMP + L-glutamate + AMP + diphosphate + 2 H(+). Its pathway is purine metabolism; GMP biosynthesis; GMP from XMP (L-Gln route): step 1/1. Functionally, catalyzes the synthesis of GMP from XMP. The protein is GMP synthase [glutamine-hydrolyzing] (guaA) of Aeropyrum pernix (strain ATCC 700893 / DSM 11879 / JCM 9820 / NBRC 100138 / K1).